A 254-amino-acid chain; its full sequence is Proteasome activator complex subunit 3 (254 aa).

An N-acetylalanine modification is found at alanine 2. Residues serine 17 and serine 24 each carry the phosphoserine modification. Lysine 195 is subject to N6-acetyllysine; by P300/CBP. Serine 247 is modified (phosphoserine; by CHEK2).

The protein belongs to the PA28 family. Homoheptamer; the stability of the heptamer is essential for the specific activation of the trypsine-like subunit and inhibition of the chymotrypsin-like and postglutamyl-preferring (PGPH) subunits of the proteasome. Interacts with p53/TP53 and MDM2. Interacts with MAP3K3. Associates with the proteasome. Interacts with CCAR2. Interacts with PSME3IP1 (via C-terminus); the interaction is direct and promotes the association of PSME3 with the 20S proteasome. Interacts with COIL; the interaction is inhibited by PSME3IP1. As to quaternary structure, (Microbial infection) Interacts with human cytomegalovirus UL27. Post-translationally, phosphorylated by MAP3K3. Phosphorylation at Ser-247 promotes its association with CCAR2. In terms of processing, acetylation at the major site Lys-195 is important for oligomerization and ability to degrade its target substrates. Deacetylated by SIRT1.

It is found in the nucleus. Its subcellular location is the cytoplasm. Its function is as follows. Subunit of the 11S REG-gamma (also called PA28-gamma) proteasome regulator, a doughnut-shaped homoheptamer which associates with the proteasome. 11S REG-gamma activates the trypsin-like catalytic subunit of the proteasome but inhibits the chymotrypsin-like and postglutamyl-preferring (PGPH) subunits. Facilitates the MDM2-p53/TP53 interaction which promotes ubiquitination- and MDM2-dependent proteasomal degradation of p53/TP53, limiting its accumulation and resulting in inhibited apoptosis after DNA damage. May also be involved in cell cycle regulation. Mediates CCAR2 and CHEK2-dependent SIRT1 inhibition. This is Proteasome activator complex subunit 3 (PSME3) from Homo sapiens (Human).